The chain runs to 834 residues: DNA-directed RNA polymerase subunit beta' (834 aa).

Residues cysteine 88, cysteine 90, cysteine 104, and cysteine 107 each coordinate Zn(2+). Aspartate 641, aspartate 643, and aspartate 645 together coordinate Mg(2+).

This sequence belongs to the RNA polymerase beta' chain family. RpoC1 subfamily. In plastids the minimal PEP RNA polymerase catalytic core is composed of four subunits: alpha, beta, beta', and beta''. When a (nuclear-encoded) sigma factor is associated with the core the holoenzyme is formed, which can initiate transcription. Mg(2+) is required as a cofactor. It depends on Zn(2+) as a cofactor.

It is found in the plastid. It carries out the reaction RNA(n) + a ribonucleoside 5'-triphosphate = RNA(n+1) + diphosphate. In terms of biological role, DNA-dependent RNA polymerase catalyzes the transcription of DNA into RNA using the four ribonucleoside triphosphates as substrates. The protein is DNA-directed RNA polymerase subunit beta' (rpoC1) of Helicosporidium sp. subsp. Simulium jonesii (Green alga).